We begin with the raw amino-acid sequence, 171 residues long: Large ribosomal subunit protein bL9 (171 aa).

Belongs to the bacterial ribosomal protein bL9 family.

Binds to the 23S rRNA. The chain is Large ribosomal subunit protein bL9 from Rickettsia rickettsii (strain Iowa).